The primary structure comprises 500 residues: Amino-acid acetyltransferase, mitochondrial (500 aa).

The N-terminal 19 residues, 1-19, are a transit peptide targeting the mitochondrion; that stretch reads MQKPSLSQDLIWILKSVQS. The N-acetyltransferase domain maps to 336-496; the sequence is FLGPKCLTDG…YMSVIDKIQP (161 aa).

The protein belongs to the acetyltransferase family.

It is found in the mitochondrion. The enzyme catalyses L-glutamate + acetyl-CoA = N-acetyl-L-glutamate + CoA + H(+). Its pathway is amino-acid biosynthesis; L-arginine biosynthesis; N(2)-acetyl-L-ornithine from L-glutamate: step 1/4. In terms of biological role, N-acetylglutamate synthase involved in arginine biosynthesis. This Schizosaccharomyces pombe (strain 972 / ATCC 24843) (Fission yeast) protein is Amino-acid acetyltransferase, mitochondrial (arg6).